Consider the following 305-residue polypeptide: Olfactory receptor 4F5 (305 aa).

Residues 1-18 (MVTEFIFLGLSDSQELQT) are Extracellular-facing. A helical membrane pass occupies residues 19–42 (FLFMLFFVFYGGIVFGNLLIVITV). Over 43 to 50 (VSDSHLHS) the chain is Cytoplasmic. Residues 51 to 72 (PMYFLLANLSLIDLSLSSVTAP) traverse the membrane as a helical segment. The Extracellular portion of the chain corresponds to 73–93 (KMITDFFSQRKVISFKGCLVQ). Residues C90 and C182 are joined by a disulfide bond. A helical membrane pass occupies residues 94 to 113 (IFLLHFFGGSEMVILIAMGF). At 114 to 132 (DRYIAICKPLHYTTIMCGN) the chain is on the cytoplasmic side. A helical transmembrane segment spans residues 133–151 (ACVGIMAVTWGIGFLHSVS). Residues 152–188 (QLAFAVHLLFCGPNEVDSFYCDLPRVIKLACTDTYRL) are Extracellular-facing. The chain crosses the membrane as a helical span at residues 189 to 212 (DIMVIANSGVLTVCSFVLLIISYT). Residues 213-228 (IILMTIQHRPLDKSSK) lie on the Cytoplasmic side of the membrane. Residues 229–251 (ALSTLTAHITVVLLFFGPCVFIY) traverse the membrane as a helical segment. Residues 252–262 (AWPFPIKSLDK) lie on the Extracellular side of the membrane. The chain crosses the membrane as a helical span at residues 263-282 (FLAVFYSVITPLLNPIIYTL). At 283 to 305 (RNKDMKTAIRQLRKWDAHSSVKF) the chain is on the cytoplasmic side.

This sequence belongs to the G-protein coupled receptor 1 family.

It is found in the cell membrane. Functionally, odorant receptor. In Homo sapiens (Human), this protein is Olfactory receptor 4F5 (OR4F5).